The sequence spans 149 residues: Large ribosomal subunit protein uL15 (149 aa).

Positions 30–63 are disordered; that stretch reads GLGKTAGRGHKGSFARKGGGKIKPGFEGGQTPMQ. The segment covering 36-49 has biased composition (basic residues); sequence GRGHKGSFARKGGG.

The protein belongs to the universal ribosomal protein uL15 family. In terms of assembly, part of the 50S ribosomal subunit.

In terms of biological role, binds to the 23S rRNA. This Xylella fastidiosa (strain 9a5c) protein is Large ribosomal subunit protein uL15.